The chain runs to 992 residues: RNA-binding protein 12 (992 aa).

In terms of domain architecture, RRM 1 spans 304 to 379 (LYVSVHGMPF…RYVEVSPATE (76 aa)). Residues Ser352 and Ser375 each carry the phosphoserine modification. Positions 393–424 (QSMGPSGQAHPPPQTLPRSKSPSGQKRSRSRS) are disordered. The span at 408–417 (LPRSKSPSGQ) shows a compositional bias: polar residues. Phosphoserine is present on residues Ser420, Ser422, and Ser424. An RRM 2 domain is found at 430 to 507 (FCVYLKGLPF…RFIQVHPITK (78 aa)). Position 525 is a phosphoserine (Ser525). Positions 849 to 913 (FGGIPQNFGN…PGFGASSGKP (65 aa)) are disordered. The segment covering 876 to 887 (LGSVPGHLSGPP) has biased composition (low complexity). Residues 916–992 (TIIKVQNMPF…GSRKVKLVLG (77 aa)) enclose the RRM 3 domain.

The protein localises to the nucleus. The polypeptide is RNA-binding protein 12 (Rbm12) (Mus musculus (Mouse)).